The following is a 94-amino-acid chain: Ribonuclease P protein component 1 (94 aa).

This sequence belongs to the eukaryotic/archaeal RNase P protein component 1 family. Consists of a catalytic RNA component and at least 4-5 protein subunits.

The protein resides in the cytoplasm. It carries out the reaction Endonucleolytic cleavage of RNA, removing 5'-extranucleotides from tRNA precursor.. Functionally, part of ribonuclease P, a protein complex that generates mature tRNA molecules by cleaving their 5'-ends. This is Ribonuclease P protein component 1 from Haloarcula marismortui (strain ATCC 43049 / DSM 3752 / JCM 8966 / VKM B-1809) (Halobacterium marismortui).